Consider the following 558-residue polypeptide: Protein NRT1/ PTR FAMILY 2.3 (558 aa).

Transmembrane regions (helical) follow at residues 33–53 (TLLGLSVTSFGWVMNLIVFLI), 69–89 (VANGCLSMLPVVAAILADSFF), 92–112 (IPVIAASSFISLLGIVLLTLI), 128–148 (VLCTPPSKLHLGILYTALALV), 176–196 (FFNWYFLTLYAGAITGATAIV), 203–223 (SWKLGFGLCAAANLISFIVFV), 329–349 (LWLSIIFVSTPMVMQTSLIVL), 371–391 (VIIIITACIVIIMNNWLVFPM), 403–423 (LQKVGIGQVLTILSMALSAVV), 439–459 (VLWLFPPLVIVGIGEAFQFPA), 478–498 (SLTSVVIGISFYLSTALIDLI), and 517–537 (VYWLLVIGGILNFGYFLVCSW).

This sequence belongs to the major facilitator superfamily. Proton-dependent oligopeptide transporter (POT/PTR) (TC 2.A.17) family. As to expression, expressed in flowers, siliques and root epidermis or cortex. Detected in shoots.

Its subcellular location is the membrane. Functionally, transporter involved in a passive nitrate efflux. The protein is Protein NRT1/ PTR FAMILY 2.3 (NPF2.3) of Arabidopsis thaliana (Mouse-ear cress).